Reading from the N-terminus, the 204-residue chain is dITP/XTP pyrophosphatase (204 aa).

8–13 serves as a coordination point for substrate; sequence TKNAGK. Aspartate 70 acts as the Proton acceptor in catalysis. Aspartate 70 is a Mg(2+) binding site. Residues serine 71, 153 to 156, lysine 176, and 181 to 182 contribute to the substrate site; these read FGYD and HR.

Belongs to the HAM1 NTPase family. As to quaternary structure, homodimer. Mg(2+) is required as a cofactor.

The enzyme catalyses XTP + H2O = XMP + diphosphate + H(+). It catalyses the reaction dITP + H2O = dIMP + diphosphate + H(+). The catalysed reaction is ITP + H2O = IMP + diphosphate + H(+). Pyrophosphatase that catalyzes the hydrolysis of nucleoside triphosphates to their monophosphate derivatives, with a high preference for the non-canonical purine nucleotides XTP (xanthosine triphosphate), dITP (deoxyinosine triphosphate) and ITP. Seems to function as a house-cleaning enzyme that removes non-canonical purine nucleotides from the nucleotide pool, thus preventing their incorporation into DNA/RNA and avoiding chromosomal lesions. The protein is dITP/XTP pyrophosphatase of Geobacillus kaustophilus (strain HTA426).